A 526-amino-acid chain; its full sequence is Probable polyol transporter 4 (526 aa).

Disordered stretches follow at residues 1–21 (MMKN…AVSV) and 28–47 (YQRM…AEAR). The span at 29–47 (QRMDSDAEESQNHREAEAR) shows a compositional bias: basic and acidic residues. The next 12 helical transmembrane spans lie at 63-83 (SLNN…VLFI), 92-112 (VQTE…SLAG), 125-145 (MALA…APSF), 153-173 (TLAG…IAEI), 180-200 (GFFT…GYVS), 215-235 (IMLA…CVIP), 300-320 (MLIV…DATV), 340-360 (AATV…TFLI), 371-391 (VSTI…TFLG), 395-415 (LGIT…SIGM), 437-457 (ALGA…FLSV), and 465-485 (GTFF…YVLV).

This sequence belongs to the major facilitator superfamily. Sugar transporter (TC 2.A.1.1) family.

Its subcellular location is the membrane. Plasma membrane sugar-proton symporter. This is Probable polyol transporter 4 (PLT4) from Arabidopsis thaliana (Mouse-ear cress).